Reading from the N-terminus, the 155-residue chain is 2-C-methyl-D-erythritol 2,4-cyclodiphosphate synthase (155 aa).

D8 and H10 together coordinate a divalent metal cation. 4-CDP-2-C-methyl-D-erythritol 2-phosphate-binding positions include 8–10 (DVH) and 34–35 (HS). H42 contacts a divalent metal cation. 4-CDP-2-C-methyl-D-erythritol 2-phosphate is bound by residues 56–58 (DIG), 61–65 (FPDSD), 100–106 (AQKPKML), 132–135 (TTEE), F139, and K142.

It belongs to the IspF family. In terms of assembly, homotrimer. Requires a divalent metal cation as cofactor.

The enzyme catalyses 4-CDP-2-C-methyl-D-erythritol 2-phosphate = 2-C-methyl-D-erythritol 2,4-cyclic diphosphate + CMP. The protein operates within isoprenoid biosynthesis; isopentenyl diphosphate biosynthesis via DXP pathway; isopentenyl diphosphate from 1-deoxy-D-xylulose 5-phosphate: step 4/6. Involved in the biosynthesis of isopentenyl diphosphate (IPP) and dimethylallyl diphosphate (DMAPP), two major building blocks of isoprenoid compounds. Catalyzes the conversion of 4-diphosphocytidyl-2-C-methyl-D-erythritol 2-phosphate (CDP-ME2P) to 2-C-methyl-D-erythritol 2,4-cyclodiphosphate (ME-CPP) with a corresponding release of cytidine 5-monophosphate (CMP). The sequence is that of 2-C-methyl-D-erythritol 2,4-cyclodiphosphate synthase from Clostridium botulinum (strain 657 / Type Ba4).